The chain runs to 161 residues: NADH:FMN oxidoreductase (161 aa).

Residues aspartate 30, 37–40 (AAST), 54–61 (CVQNSSTT), alanine 88, arginine 94, and phenylalanine 151 each bind FMN.

This sequence belongs to the non-flavoprotein flavin reductase family.

It localises to the cytoplasm. It catalyses the reaction FMNH2 + NAD(+) = FMN + NADH + 2 H(+). The enzyme catalyses FADH2 + NAD(+) = FAD + NADH + 2 H(+). It functions in the pathway sulfur metabolism; dibenzothiophene degradation. An NADH:FMN oxidoreductase which supplies reduced FMN for the '4S' desulfurization pathway that removes covalently bound sulfur from dibenzothiophene (DBT) without breaking carbon-carbon bonds. Can also use FAD. Provides DszC and probably also DszA (DBT-monooxygenase and DBTO2-monooxygenase respectively) with reduced flavin (FMN and/or FAD). The protein is NADH:FMN oxidoreductase of Mycolicibacterium goodii (Mycobacterium goodii).